The primary structure comprises 73 residues: RNA-binding protein Hfq (73 aa).

Residues 8–68 (DQFLNQIRKD…ISTFAPQKNV (61 aa)) enclose the Sm domain.

It belongs to the Hfq family. Homohexamer.

RNA chaperone that binds small regulatory RNA (sRNAs) and mRNAs to facilitate mRNA translational regulation in response to envelope stress, environmental stress and changes in metabolite concentrations. Also binds with high specificity to tRNAs. The protein is RNA-binding protein Hfq of Bacillus velezensis (strain DSM 23117 / BGSC 10A6 / LMG 26770 / FZB42) (Bacillus amyloliquefaciens subsp. plantarum).